A 302-amino-acid chain; its full sequence is Heme A synthase (302 aa).

Residues 1–6 (MNKALK) lie on the Cytoplasmic side of the membrane. Residues 7 to 27 (GLGIITTIAMLFVLIGGALVT) form a helical membrane-spanning segment. Topologically, residues 28-61 (KTGSGMGCGRSWPLCNGSIFPALTLESIIEWSHR) are extracellular. A disulfide bridge connects residues C35 and C42. E57 is an active-site residue. Residue H60 coordinates heme o. A helical membrane pass occupies residues 62–82 (FVSGTSGVLVLALAIWTWKKI). Residues 83–91 (GHIRETKFL) lie on the Cytoplasmic side of the membrane. Residues 92–112 (AVMSVVFLILQALLGAAAVVF) traverse the membrane as a helical segment. The Extracellular portion of the chain corresponds to 113 to 120 (GSSALIMA). A helical transmembrane segment spans residues 121–141 (LHFGISLISFASVLLLTLLVF). H122 lines the heme o pocket. The Cytoplasmic portion of the chain corresponds to 142-158 (EADSKQKSESFYIGKTM). The helical transmembrane segment at 159 to 179 (QFHMIGIIIYTYVVVYTGAYV) threads the bilayer. Residues 180-208 (RHTSSSLACLDFPMCSTENGWLPGKFHEW) lie on the Extracellular side of the membrane. A disulfide bridge links C188 with C194. A helical membrane pass occupies residues 209 to 229 (VQMGHRAAALLLFAWIIAAAV). H213 provides a ligand contact to heme b. The Cytoplasmic portion of the chain corresponds to 230-242 (HAARQYKNQKRIY). Residues 243-263 (WGWMISLILIILQAASGIAVV) form a helical membrane-spanning segment. The Extracellular portion of the chain corresponds to 264-272 (YSRLDLGFA). The chain crosses the membrane as a helical span at residues 273-293 (LAHAFFISCLFGILCYFLLLV). H275 provides a ligand contact to heme b. Residues 294–302 (ARYRRQVQK) are Cytoplasmic-facing.

It belongs to the COX15/CtaA family. Type 1 subfamily. As to quaternary structure, interacts with CtaB. Heme b is required as a cofactor.

The protein localises to the cell membrane. The catalysed reaction is Fe(II)-heme o + 2 A + H2O = Fe(II)-heme a + 2 AH2. It participates in porphyrin-containing compound metabolism; heme A biosynthesis; heme A from heme O: step 1/1. Catalyzes the conversion of heme O to heme A by two successive hydroxylations of the methyl group at C8. The first hydroxylation forms heme I, the second hydroxylation results in an unstable dihydroxymethyl group, which spontaneously dehydrates, resulting in the formyl group of heme A. This is Heme A synthase from Bacillus licheniformis (strain ATCC 14580 / DSM 13 / JCM 2505 / CCUG 7422 / NBRC 12200 / NCIMB 9375 / NCTC 10341 / NRRL NRS-1264 / Gibson 46).